The chain runs to 183 residues: Akirin-1B (183 aa).

Positions 14-43 (EALMSPQSPKRRRCAPLPGSPATPSPQRCG) are disordered. Residues 180–183 (SYVS) carry the SYVS motif motif.

The protein belongs to the akirin family.

The protein localises to the nucleus. Its function is as follows. Molecular adapter that acts as a bridge between proteins, and which is involved skeletal muscle development. Functions as a signal transducer for MSTN during skeletal muscle regeneration and myogenesis. The protein is Akirin-1B (akirin1-b) of Xenopus laevis (African clawed frog).